The primary structure comprises 363 residues: Ataxin-3 (363 aa).

The 180-residue stretch at 1-180 (MESIFHERQE…DCEADQLLQM (180 aa)) folds into the Josephin domain. The active-site Nucleophile is the Cys14. His119 acts as the Proton acceptor in catalysis. Asn134 is an active-site residue. Over residues 192–209 (IGEETAQSRDQRLPRSDV) the composition is skewed to basic and acidic residues. Residues 192–212 (IGEETAQSRDQRLPRSDVDQA) form a disordered region. 3 consecutive UIM domains span residues 227–246 (EDEE…IDME), 247–266 (DEEA…SRQS), and 337–356 (SEED…ARNH). Polar residues predominate over residues 260–290 (MQGSRQSEFSNSLPQNASQPPHTSQTDSLSS). The disordered stretch occupies residues 260–363 (MQGSRQSEFS…RNHLSTEEKK (104 aa)). A compositionally biased stretch (basic and acidic residues) spans 353–363 (ARNHLSTEEKK).

Widely expressed.

Its subcellular location is the nucleus matrix. It localises to the nucleus. The protein localises to the lysosome membrane. The enzyme catalyses Thiol-dependent hydrolysis of ester, thioester, amide, peptide and isopeptide bonds formed by the C-terminal Gly of ubiquitin (a 76-residue protein attached to proteins as an intracellular targeting signal).. Functionally, deubiquitinating enzyme involved in protein homeostasis maintenance, transcription, cytoskeleton regulation, myogenesis and degradation of misfolded chaperone substrates. Binds long polyubiquitin chains and trims them, while it has weak or no activity against chains of 4 or less ubiquitins. Involved in degradation of misfolded chaperone substrates via its interaction with STUB1/CHIP: recruited to monoubiquitinated STUB1/CHIP, and restricts the length of ubiquitin chain attached to STUB1/CHIP substrates and preventing further chain extension. Interacts with key regulators of transcription and represses transcription: acts as a histone-binding protein that regulates transcription. Acts as a negative regulator of mTORC1 signaling in response to amino acid deprivation by mediating deubiquitination of RHEB, thereby promoting RHEB inactivation by the TSC-TBC complex. Regulates autophagy via the deubiquitination of 'Lys-402' of BECN1 leading to the stabilization of BECN1. This is Ataxin-3 (ATXN3) from Gallus gallus (Chicken).